Consider the following 120-residue polypeptide: NAD(P)H-quinone oxidoreductase subunit 3, chloroplastic (120 aa).

3 consecutive transmembrane segments (helical) span residues 9–29 (IFWAFLIISSVIPILAFFISG), 64–84 (MFALVFVVFDVETVFLYPWAM), and 88–108 (VLGVSVFIEALIFVLILIVGS).

This sequence belongs to the complex I subunit 3 family. As to quaternary structure, NDH is composed of at least 16 different subunits, 5 of which are encoded in the nucleus.

It localises to the plastid. The protein localises to the chloroplast thylakoid membrane. The catalysed reaction is a plastoquinone + NADH + (n+1) H(+)(in) = a plastoquinol + NAD(+) + n H(+)(out). It carries out the reaction a plastoquinone + NADPH + (n+1) H(+)(in) = a plastoquinol + NADP(+) + n H(+)(out). Functionally, NDH shuttles electrons from NAD(P)H:plastoquinone, via FMN and iron-sulfur (Fe-S) centers, to quinones in the photosynthetic chain and possibly in a chloroplast respiratory chain. The immediate electron acceptor for the enzyme in this species is believed to be plastoquinone. Couples the redox reaction to proton translocation, and thus conserves the redox energy in a proton gradient. The protein is NAD(P)H-quinone oxidoreductase subunit 3, chloroplastic of Vitis vinifera (Grape).